Consider the following 1063-residue polypeptide: Unconventional myosin-Ic (1063 aa).

Met1 carries the N-acetylmethionine modification. The residue at position 10 (Thr10) is a Phosphoserine. The region spanning 47–731 (GVQDFVLLEN…TLFATEDSLE (685 aa)) is the Myosin motor domain. Residues Asn88, Tyr96, 139 to 148 (SGESGAGKTE), and 192 to 196 (NDNSS) contribute to the ATP site. Lys383 carries the N6-methyllysine modification. The residue at position 408 (Ser408) is a Phosphoserine. Lys486 is subject to N6-acetyllysine. At Ser536 the chain carries Phosphoserine. The segment at 608–630 (LLQLVEILRSKEPAYIRCIKPND) is actin-binding. 2 IQ domains span residues 734–757 (RQSL…FLRV) and 758–786 (KRSA…AAQT). Residues Ser864 and Ser1041 each carry the phosphoserine modification. The region spanning 885 to 1059 (KDNYPQSVPR…NGHLAVVAPR (175 aa)) is the TH1 domain.

This sequence belongs to the TRAFAC class myosin-kinesin ATPase superfamily. Myosin family. In terms of assembly, interacts (via its IQ motifs) with CABP1 and CIB1; the interaction with CABP1 and CIB1 is calcium-dependent. Interacts (via tail domain) with PLEKHB1 (via PH domain); the interaction is not affected by the presence or absence of calcium and CALM. Interacts with POLR1A. Interacts with POLR2A. Component of the B-WICH complex, at least composed of SMARCA5/SNF2H, BAZ1B/WSTF, SF3B1, DEK, MYO1C, ERCC6, MYBBP1A and DDX21. Interacts (via its IQ motifs) with CALM; this precludes interaction with YWHAB. Interacts with YWHAB; this precludes interaction with CALM. Interacts with RPS6. Interacts with actin. Interacts with LLPH. Interacts with GLUT4. Interacts (via its IQ motifs) with SH3BGRL3; the interaction is dependent on calcium and takes place at membrane ruffles. Isoform 2 contains a N-acetylmethionine at position 1. Isoform 3 is expressed in small intestine, pancreas, brain, kidney, skin, heart muscle, testis, striated muscle, spleen, liver and lung (at protein level). Expressed in brain, testis, adrenal glands, thymus, spleen, kidney, lung, heart, cochlea and vestibule. Expressed in sensory hair cells of the inner ear. Expressed in adipocytes.

The protein localises to the cytoplasm. The protein resides in the nucleus. It localises to the cell cortex. It is found in the cell projection. Its subcellular location is the stereocilium membrane. The protein localises to the cytoplasmic vesicle. The protein resides in the ruffle membrane. It localises to the nucleolus. It is found in the nucleoplasm. In terms of biological role, myosins are actin-based motor molecules with ATPase activity. Unconventional myosins serve in intracellular movements. Their highly divergent tails bind to membranous compartments, which then are moved relative to actin filaments. Involved in glucose transporter recycling in response to insulin by regulating movement of intracellular GLUT4-containing vesicles to the plasma membrane. Component of the hair cell's (the sensory cells of the inner ear) adaptation-motor complex. Acts as a mediator of adaptation of mechanoelectrical transduction in stereocilia of vestibular hair cells. Binds phosphoinositides and links the actin cytoskeleton to cellular membranes. Its function is as follows. Involved in regulation of transcription. Associated with transcriptional active ribosomal genes. Appears to cooperate with the WICH chromatin-remodeling complex to facilitate transcription. Necessary for the formation of the first phosphodiester bond during transcription initiation. The sequence is that of Unconventional myosin-Ic (Myo1c) from Mus musculus (Mouse).